A 393-amino-acid polypeptide reads, in one-letter code: Formate-dependent phosphoribosylglycinamide formyltransferase (393 aa).

N(1)-(5-phospho-beta-D-ribosyl)glycinamide is bound by residues 15–16 (EL) and E75. ATP is bound by residues R107, K148, 153 to 158 (SSGKGQ), 188 to 191 (EEYI), and E196. The region spanning 112–302 (NLAAEKLAIK…EFELHLRAIL (191 aa)) is the ATP-grasp domain. Mg(2+) is bound by residues E261 and E273. N(1)-(5-phospho-beta-D-ribosyl)glycinamide contacts are provided by residues D280, K350, and 357 to 358 (RR).

This sequence belongs to the PurK/PurT family. Homodimer.

It carries out the reaction N(1)-(5-phospho-beta-D-ribosyl)glycinamide + formate + ATP = N(2)-formyl-N(1)-(5-phospho-beta-D-ribosyl)glycinamide + ADP + phosphate + H(+). Its pathway is purine metabolism; IMP biosynthesis via de novo pathway; N(2)-formyl-N(1)-(5-phospho-D-ribosyl)glycinamide from N(1)-(5-phospho-D-ribosyl)glycinamide (formate route): step 1/1. Involved in the de novo purine biosynthesis. Catalyzes the transfer of formate to 5-phospho-ribosyl-glycinamide (GAR), producing 5-phospho-ribosyl-N-formylglycinamide (FGAR). Formate is provided by PurU via hydrolysis of 10-formyl-tetrahydrofolate. The chain is Formate-dependent phosphoribosylglycinamide formyltransferase from Prochlorococcus marinus (strain SARG / CCMP1375 / SS120).